The primary structure comprises 916 residues: Probable dipeptidyl-aminopeptidase B (916 aa).

Disordered stretches follow at residues 1 to 35 (MGRTGDLENAEFFPMTRRRSTSGTSSRSSTDSGLS) and 67 to 86 (DAEADVDEPFLPTSSKKLGS). Residues 1 to 92 (MGRTGDLENA…KLGSGSRTRQ (92 aa)) are Cytoplasmic-facing. Low complexity predominate over residues 21-35 (TSGTSSRSSTDSGLS). Residues 93-113 (IFWALVILCLGGWVLALVLFL) form a helical; Signal-anchor for type II membrane protein membrane-spanning segment. Residues 114–916 (THGRASSQTA…VKRSVPAFAH (803 aa)) lie on the Vacuolar side of the membrane. Residues asparagine 349 and asparagine 640 are each glycosylated (N-linked (GlcNAc...) asparagine). Serine 754 functions as the Charge relay system in the catalytic mechanism. 2 N-linked (GlcNAc...) asparagine glycosylation sites follow: asparagine 808 and asparagine 813. Catalysis depends on charge relay system residues aspartate 831 and histidine 864.

This sequence belongs to the peptidase S9B family.

Its subcellular location is the vacuole membrane. It carries out the reaction Release of an N-terminal dipeptide, Xaa-Yaa-|-Zaa-, from a polypeptide, preferentially when Yaa is Pro, provided Zaa is neither Pro nor hydroxyproline.. Functionally, type IV dipeptidyl-peptidase which removes N-terminal dipeptides sequentially from polypeptides having unsubstituted N-termini provided that the penultimate residue is proline. This chain is Probable dipeptidyl-aminopeptidase B (dapB), found in Aspergillus flavus (strain ATCC 200026 / FGSC A1120 / IAM 13836 / NRRL 3357 / JCM 12722 / SRRC 167).